The sequence spans 434 residues: Nicotinate phosphoribosyltransferase (434 aa).

Histidine 242 is subject to Phosphohistidine; by autocatalysis.

Belongs to the NAPRTase family. Transiently phosphorylated on a His residue during the reaction cycle. Phosphorylation strongly increases the affinity for substrates and increases the rate of nicotinate D-ribonucleotide production. Dephosphorylation regenerates the low-affinity form of the enzyme, leading to product release.

It carries out the reaction nicotinate + 5-phospho-alpha-D-ribose 1-diphosphate + ATP + H2O = nicotinate beta-D-ribonucleotide + ADP + phosphate + diphosphate. The protein operates within cofactor biosynthesis; NAD(+) biosynthesis; nicotinate D-ribonucleotide from nicotinate: step 1/1. Functionally, catalyzes the synthesis of beta-nicotinate D-ribonucleotide from nicotinate and 5-phospho-D-ribose 1-phosphate at the expense of ATP. The chain is Nicotinate phosphoribosyltransferase from Rhizobium rhizogenes (strain K84 / ATCC BAA-868) (Agrobacterium radiobacter).